The sequence spans 540 residues: MSAEPVCSALPAIPYHKLADLRYLSRGASGTVSSARHADWRVQVAVKHLHIHSPLLDSERNDVLREAEILHKARFSYILPILGICNEPEFLGIVTEYMPNGSLNELLHRKIEYPDVPWPLRFRILHEIALGVNYLHNMNPPLLHHDLKTQNILLDNEFHVKIADFGLSKWRMMSLSQSRSSKSAPEGGTIVYMPPENYEPGQKARASVKHDIYSYAIIIWEVLSRKQPFEDVTNPLQIMYSVSQGHRPDTNEESLPFDIPHRALMISLIESGWAQNPDERPSFLKCLIELEPVLRTFEEITFLEAVIQLKKTKLQNASRTVHLSDKKKRELSPNIPVNSGPREESCGSSQLHKTSGSPGTSRSLSAPQDKDFLSAKTQDFSALHQCSVNHSRNSDFCVDCQVAFCDHRTAPCSLAIVNPLSAEGNSGRFQPGIAQQWIQSKREDIVSQMTEACLNQSLDALLSRDLIMKEDYELISTKPTRTSKVRQLLDTTDIQGEEFARVIVQKLKDNKQMGLQPYPEILVLSQSPSLNFFHNKSHKK.

A Protein kinase domain is found at 18–294; sequence LADLRYLSRG…KCLIELEPVL (277 aa). ATP-binding positions include 24–32 and lysine 47; that span reads LSRGASGTV. Positions 65 to 73 are helix alphaC; sequence REAEILHKA. The active-site Proton acceptor is the aspartate 146. The tract at residues 167–193 is activation segment (AS); sequence LSKWRMMSLSQSRSSKSAPEGGTIVYM. Residue serine 168 is modified to Phosphoserine. Serine 174 carries the phosphoserine; alternate modification. At serine 176 the chain carries Phosphoserine; by autocatalysis. Position 178 is a phosphoserine; alternate (serine 178). Serine 180 is modified (phosphoserine). Serine 181 is subject to Phosphoserine; alternate. Residue lysine 209 forms a Glycyl lysine isopeptide (Lys-Gly) (interchain with G-Cter in ubiquitin) linkage. The segment at 318–367 is disordered; the sequence is SRTVHLSDKKKRELSPNIPVNSGPREESCGSSQLHKTSGSPGTSRSLSAP. Residues 322-331 show a composition bias toward basic and acidic residues; that stretch reads HLSDKKKREL. The segment covering 346 to 366 has biased composition (polar residues); sequence CGSSQLHKTSGSPGTSRSLSA. Serine 363 and serine 391 each carry phosphoserine. The CARD domain occupies 432–524; the sequence is GIAQQWIQSK…LQPYPEILVL (93 aa). Position 472 is a phosphotyrosine; by autocatalysis (tyrosine 472). Phosphoserine occurs at positions 525, 527, and 529. A Glycyl lysine isopeptide (Lys-Gly) (interchain with G-Cter in ubiquitin) cross-link involves residue lysine 536. A Phosphoserine modification is found at serine 537.

Belongs to the protein kinase superfamily. TKL Ser/Thr protein kinase family. As to quaternary structure, interacts (via CARD domain) with NOD2 (via CARD domain). Interacts (via CARD domain) with NOD1 (via CARD domain). Homooligomer; following interaction with NOD1 or NOD2, homooligomerizes via its CARD domain and forms long filaments named RIPosomes. Found in a signaling complex consisting of at least ARHGEF2, NOD2 and RIPK2. Interacts with ARHGEF2; the interaction mediates tyrosine phosphorylation of RIPK2 by Src kinase CSK. Interacts with MAP3K4; this interaction sequesters RIPK2 from the NOD2 signaling pathway. Interacts with IKBKG/NEMO. The polyubiquitinated protein interacts with MAP3K7/TAK1; interaction is indirect and is mediated by TAB2 and TAB3 that bind to polyubiquitin chains attached to RIPK2. Binds to CFLAR/CLARP and CASP1 via their CARD domains. Binds to BIRC3/c-IAP1 and BIRC2/c-IAP2, TRAF1, TRAF2, TRAF5 and TRAF6. Interacts with NLRP10. Interacts with CARD9. Interacts with INAVA; the interaction takes place upon PRR stimulation. Interacts (via CARD domain) with NGFR (via death domain). Interacts with IRGM; promoting RIPK2 degradation. Post-translationally, polyubiquitinated via both 'Lys-63'- and 'Met-1'-linked polyubiquitin following recruitment by NOD1 or NOD2, creating docking sites for downstream effectors, triggering activation of the NF-kappa-B and MAP kinases signaling. 'Lys-63'-linked polyubiquitination by XIAP is essential for NOD2 signaling and promotes recruitment of the LUBAC complex. Also polyubiquitinated with 'Lys-63'-linked chains by PELI3, BIRC2/c-IAP1 and BIRC3/c-IAP2. Ubiquitinated on Lys-209 via 'Lys-63'-linked by ITCH. Undergoes 'Lys-63'-linked deubiquitination by MYSM1 to attenuate NOD2-mediated inflammation and tissue damage. Polyubiquitinated with 'Lys-63'-linked chains in response to Shigella infection, promoting its SQSTM1/p62-dependent autophagic degradation. Undergoes 'Met-1'-linked polyubiquitination; the head-to-tail linear polyubiquitination is mediated by the LUBAC complex in response to NOD2 stimulation 'Met-1'-linked polyubiquitination. 'Lys-63'-linked polyubiquitination by XIAP is required for recruimtent of the LUBAC complex and subsequent. Linear polyubiquitination is restricted by FAM105B/otulin, probably to limit NOD2-dependent pro-inflammatory signaling activation of NF-kappa-B. Autophosphorylated. Phosphorylated at Ser-176, either via autophosphorylation or by LRRK2, enhancing activity. Autophosphorylation at Tyr-472 is required for effective NOD2 signaling. Autophosphorylation is however not essential for NOD2 signaling. In terms of processing, degraded via selective autophagy following interaction with IRGM. IRGM promotes NOD1/NOD2-RIPK2 RIPosome recruitment to autophagosome membranes. RIPK2 biquitinated via 'Lys-63'-linked chains is then recognized by SQSTM1/p62, leading to the SQSTM1/p62-dependent autophagic degradation of the NOD1/NOD2-RIPK2 RIPosome.

Its subcellular location is the cytoplasm. The protein resides in the cell membrane. It is found in the endoplasmic reticulum. The catalysed reaction is L-seryl-[protein] + ATP = O-phospho-L-seryl-[protein] + ADP + H(+). It catalyses the reaction L-threonyl-[protein] + ATP = O-phospho-L-threonyl-[protein] + ADP + H(+). It carries out the reaction L-tyrosyl-[protein] + ATP = O-phospho-L-tyrosyl-[protein] + ADP + H(+). In the inactive state, the helix alphaC is packed against the helical, non-phosphorylated activation segment (AS). Upon activation, helix alphaC is displaced and the phosphorylated AS becomes disordered. Its function is as follows. Serine/threonine/tyrosine-protein kinase that plays an essential role in modulation of innate and adaptive immune responses. Acts as a key effector of NOD1 and NOD2 signaling pathways: upon activation by bacterial peptidoglycans, NOD1 and NOD2 oligomerize and recruit RIPK2 via CARD-CARD domains, leading to the formation of RIPK2 filaments. Once recruited, RIPK2 autophosphorylates and undergoes 'Lys-63'-linked polyubiquitination by E3 ubiquitin ligases XIAP, BIRC2 and BIRC3, as well as 'Met-1'-linked (linear) polyubiquitination by the LUBAC complex, becoming a scaffolding protein for downstream effectors. 'Met-1'-linked polyubiquitin chains attached to RIPK2 recruit IKBKG/NEMO, which undergoes 'Lys-63'-linked polyubiquitination in a RIPK2-dependent process. 'Lys-63'-linked polyubiquitin chains attached to RIPK2 serve as docking sites for TAB2 and TAB3 and mediate the recruitment of MAP3K7/TAK1 to IKBKG/NEMO, inducing subsequent activation of IKBKB/IKKB. In turn, NF-kappa-B is released from NF-kappa-B inhibitors and translocates into the nucleus where it activates the transcription of hundreds of genes involved in immune response, growth control, or protection against apoptosis. The protein kinase activity is dispensable for the NOD1 and NOD2 signaling pathways. Contributes to the tyrosine phosphorylation of the guanine exchange factor ARHGEF2 through Src tyrosine kinase leading to NF-kappa-B activation by NOD2. Also involved in adaptive immunity: plays a role during engagement of the T-cell receptor (TCR) in promoting BCL10 phosphorylation and subsequent NF-kappa-B activation. Plays a role in the inactivation of RHOA in response to NGFR signaling. The sequence is that of Receptor-interacting serine/threonine-protein kinase 2 (RIPK2) from Bos taurus (Bovine).